The primary structure comprises 422 residues: Gamma-glutamyl phosphate reductase (422 aa).

Belongs to the gamma-glutamyl phosphate reductase family.

It is found in the cytoplasm. It catalyses the reaction L-glutamate 5-semialdehyde + phosphate + NADP(+) = L-glutamyl 5-phosphate + NADPH + H(+). It participates in amino-acid biosynthesis; L-proline biosynthesis; L-glutamate 5-semialdehyde from L-glutamate: step 2/2. Functionally, catalyzes the NADPH-dependent reduction of L-glutamate 5-phosphate into L-glutamate 5-semialdehyde and phosphate. The product spontaneously undergoes cyclization to form 1-pyrroline-5-carboxylate. The protein is Gamma-glutamyl phosphate reductase of Saccharophagus degradans (strain 2-40 / ATCC 43961 / DSM 17024).